We begin with the raw amino-acid sequence, 424 residues long: Probable methyltransferase EP424R (424 aa).

The region spanning 103-315 is the Adrift-type SAM-dependent 2'-O-MTase domain; it reads QIVTNAWLKM…TYIVGKNRLR (213 aa). Residues G135 and D228 each coordinate S-adenosyl-L-methionine. K268 functions as the Proton acceptor in the catalytic mechanism.

The protein localises to the virion. In Ornithodoros (relapsing fever ticks), this protein is Probable methyltransferase EP424R.